The sequence spans 305 residues: Phosphoribosylaminoimidazole-succinocarboxamide synthase (305 aa).

Belongs to the SAICAR synthetase family.

The catalysed reaction is 5-amino-1-(5-phospho-D-ribosyl)imidazole-4-carboxylate + L-aspartate + ATP = (2S)-2-[5-amino-1-(5-phospho-beta-D-ribosyl)imidazole-4-carboxamido]succinate + ADP + phosphate + 2 H(+). It participates in purine metabolism; IMP biosynthesis via de novo pathway; 5-amino-1-(5-phospho-D-ribosyl)imidazole-4-carboxamide from 5-amino-1-(5-phospho-D-ribosyl)imidazole-4-carboxylate: step 1/2. This chain is Phosphoribosylaminoimidazole-succinocarboxamide synthase, found in Tropheryma whipplei (strain TW08/27) (Whipple's bacillus).